We begin with the raw amino-acid sequence, 705 residues long: DNA ligase (705 aa).

Residues 42-46 (DADFD), 91-92 (SL), and Glu-125 each bind NAD(+). The active-site N6-AMP-lysine intermediate is the Lys-127. NAD(+) contacts are provided by Arg-148, Glu-183, Lys-299, and Lys-323. Cys-428, Cys-431, Cys-446, and Cys-452 together coordinate Zn(2+). The BRCT domain maps to 626–705 (TDGSPVAGKT…DGWLALIEGL (80 aa)).

Belongs to the NAD-dependent DNA ligase family. LigA subfamily. The cofactor is Mg(2+). It depends on Mn(2+) as a cofactor.

It carries out the reaction NAD(+) + (deoxyribonucleotide)n-3'-hydroxyl + 5'-phospho-(deoxyribonucleotide)m = (deoxyribonucleotide)n+m + AMP + beta-nicotinamide D-nucleotide.. DNA ligase that catalyzes the formation of phosphodiester linkages between 5'-phosphoryl and 3'-hydroxyl groups in double-stranded DNA using NAD as a coenzyme and as the energy source for the reaction. It is essential for DNA replication and repair of damaged DNA. The protein is DNA ligase of Roseobacter denitrificans (strain ATCC 33942 / OCh 114) (Erythrobacter sp. (strain OCh 114)).